A 459-amino-acid polypeptide reads, in one-letter code: Ribulose bisphosphate carboxylase large chain (459 aa).

An N6,N6,N6-trimethyllysine modification is found at Lys-4. Substrate is bound by residues Asn-113 and Thr-163. Lys-165 functions as the Proton acceptor in the catalytic mechanism. Lys-167 provides a ligand contact to substrate. 3 residues coordinate Mg(2+): Lys-191, Asp-193, and Glu-194. Lys-191 is modified (N6-carboxylysine). Catalysis depends on His-284, which acts as the Proton acceptor. Residues Arg-285, His-317, and Ser-369 each coordinate substrate.

This sequence belongs to the RuBisCO large chain family. Type I subfamily. In terms of assembly, heterohexadecamer of 8 large chains and 8 small chains; disulfide-linked. The disulfide link is formed within the large subunit homodimers. Requires Mg(2+) as cofactor. Post-translationally, the disulfide bond which can form in the large chain dimeric partners within the hexadecamer appears to be associated with oxidative stress and protein turnover.

The protein resides in the plastid. It localises to the chloroplast. It carries out the reaction 2 (2R)-3-phosphoglycerate + 2 H(+) = D-ribulose 1,5-bisphosphate + CO2 + H2O. The catalysed reaction is D-ribulose 1,5-bisphosphate + O2 = 2-phosphoglycolate + (2R)-3-phosphoglycerate + 2 H(+). In terms of biological role, ruBisCO catalyzes two reactions: the carboxylation of D-ribulose 1,5-bisphosphate, the primary event in carbon dioxide fixation, as well as the oxidative fragmentation of the pentose substrate in the photorespiration process. Both reactions occur simultaneously and in competition at the same active site. This chain is Ribulose bisphosphate carboxylase large chain, found in Parnassia fimbriata (Fringed grass-of-Parnassus).